The following is a 159-amino-acid chain: NADH-quinone oxidoreductase subunit B (159 aa).

4 residues coordinate [4Fe-4S] cluster: Cys36, Cys37, Cys102, and Cys132.

Belongs to the complex I 20 kDa subunit family. NDH-1 is composed of 14 different subunits. Subunits NuoB, C, D, E, F, and G constitute the peripheral sector of the complex. It depends on [4Fe-4S] cluster as a cofactor.

It localises to the cell inner membrane. The catalysed reaction is a quinone + NADH + 5 H(+)(in) = a quinol + NAD(+) + 4 H(+)(out). NDH-1 shuttles electrons from NADH, via FMN and iron-sulfur (Fe-S) centers, to quinones in the respiratory chain. The immediate electron acceptor for the enzyme in this species is believed to be ubiquinone. Couples the redox reaction to proton translocation (for every two electrons transferred, four hydrogen ions are translocated across the cytoplasmic membrane), and thus conserves the redox energy in a proton gradient. The sequence is that of NADH-quinone oxidoreductase subunit B from Acidovorax ebreus (strain TPSY) (Diaphorobacter sp. (strain TPSY)).